Here is a 160-residue protein sequence, read N- to C-terminus: V-type proton ATPase subunit c (160 aa).

Residues 1-8 (MTELCPVY) are Vacuolar-facing. Residues 9–31 (APFFGAIGCASAIIFTSLGAAYG) form a helical membrane-spanning segment. Residues 32–53 (TAKSGVGICATCVLRPDLLFKN) are Cytoplasmic-facing. Residues 54 to 74 (IVPVIMAGIIAIYGLVVSVLV) form a helical membrane-spanning segment. Topologically, residues 75 to 90 (CYSLGQKQALYTGFIQ) are vacuolar. Residues 91–112 (LGAGLSVGLSGLAAGFAIGIVG) form a helical membrane-spanning segment. Topologically, residues 113–124 (DAGVRGSSQQPR) are cytoplasmic. Residues 125–150 (LFVGMILILIFAEVLGLYGLIVALLL) traverse the membrane as a helical segment. Residues 151–160 (NSRATQDVVC) lie on the Vacuolar side of the membrane.

It belongs to the V-ATPase proteolipid subunit family. As to quaternary structure, V-ATPase is a heteromultimeric enzyme composed of a peripheral catalytic V1 complex (components A to H) attached to an integral membrane V0 proton pore complex (components: a, c, c', c'', d, e, f and VOA1). The decameric c-ring forms the proton-conducting pore, and is composed of eight proteolipid subunits c, one subunit c' and one subunit c''.

It localises to the vacuole membrane. In terms of biological role, proton-conducting pore forming subunit of the V0 complex of vacuolar(H+)-ATPase (V-ATPase), a multisubunit enzyme composed of a peripheral complex (V1) that hydrolyzes ATP and a membrane integral complex (V0) that translocates protons. V-ATPase is responsible for acidifying and maintaining the pH of intracellular compartments. The chain is V-type proton ATPase subunit c (VMA3) from Saccharomyces cerevisiae (strain ATCC 204508 / S288c) (Baker's yeast).